Consider the following 130-residue polypeptide: Small ribosomal subunit protein uS8 (130 aa).

This sequence belongs to the universal ribosomal protein uS8 family. Part of the 30S ribosomal subunit. Contacts proteins S5 and S12.

Its function is as follows. One of the primary rRNA binding proteins, it binds directly to 16S rRNA central domain where it helps coordinate assembly of the platform of the 30S subunit. This Cereibacter sphaeroides (strain KD131 / KCTC 12085) (Rhodobacter sphaeroides) protein is Small ribosomal subunit protein uS8.